Reading from the N-terminus, the 326-residue chain is N-acetyl-gamma-glutamyl-phosphate reductase (326 aa).

Residue Cys155 is part of the active site.

The protein belongs to the NAGSA dehydrogenase family. Type 1 subfamily.

The protein localises to the cytoplasm. It carries out the reaction N-acetyl-L-glutamate 5-semialdehyde + phosphate + NADP(+) = N-acetyl-L-glutamyl 5-phosphate + NADPH + H(+). It functions in the pathway amino-acid biosynthesis; L-arginine biosynthesis; N(2)-acetyl-L-ornithine from L-glutamate: step 3/4. Catalyzes the NADPH-dependent reduction of N-acetyl-5-glutamyl phosphate to yield N-acetyl-L-glutamate 5-semialdehyde. In Shewanella baltica (strain OS185), this protein is N-acetyl-gamma-glutamyl-phosphate reductase.